We begin with the raw amino-acid sequence, 516 residues long: Katanin p60 ATPase-containing subunit A1 (516 aa).

The segment at 75-212 (GFKSEPAAPE…DEKKFDPAGY (138 aa)) is disordered. Basic and acidic residues-rich tracts occupy residues 133-143 (ARKDPPRRSEP) and 155-167 (RGGRGPSDRRGDA). Residues 168-178 (RSGGGGRGGAR) show a composition bias toward gly residues. The span at 179 to 212 (GSDKDKNRGGKSDKDKKAPSGEEGDEKKFDPAGY) shows a compositional bias: basic and acidic residues. 274-281 (GPPGTGKT) contacts ATP.

The protein belongs to the AAA ATPase family. Katanin p60 subunit A1 subfamily. In terms of assembly, can homooligomerize into hexameric rings, which may be promoted by interaction with microtubules. Interacts with KATNB1, which may serve as a targeting subunit.

It is found in the cytoplasm. The protein localises to the cytoskeleton. Its subcellular location is the microtubule organizing center. It localises to the centrosome. The protein resides in the spindle pole. It catalyses the reaction n ATP + n H2O + a microtubule = n ADP + n phosphate + (n+1) alpha/beta tubulin heterodimers.. ATPase activity is stimulated by microtubules, which promote homooligomerization. ATP-dependent microtubule severing is stimulated by interaction with KATNB1. Functionally, catalytic subunit of a complex which severs microtubules in an ATP-dependent manner. Microtubule severing may promote rapid reorganization of cellular microtubule arrays and the release of microtubules from the centrosome following nucleation. In mitotic spindles this could allow depolymerization of the microtubule end proximal to the centrosome, and subsequent poleward microtubule flux. This Strongylocentrotus purpuratus (Purple sea urchin) protein is Katanin p60 ATPase-containing subunit A1.